The primary structure comprises 397 residues: 3-ketoacyl-CoA thiolase, mitochondrial (397 aa).

A mitochondrion; not cleaved-targeting transit peptide spans 1 to 16 (MALLRGVFIVAAKRTP). N6-acetyllysine; alternate is present on Lys-25. At Lys-25 the chain carries N6-succinyllysine; alternate. Cys-92 acts as the Acyl-thioester intermediate in catalysis. Thr-119 carries the phosphothreonine modification. A Phosphoserine modification is found at Ser-121. Tyr-127 carries the post-translational modification Phosphotyrosine. Thr-136 is subject to Phosphothreonine. At Lys-137 the chain carries N6-acetyllysine; alternate. Lys-137 carries the post-translational modification N6-succinyllysine; alternate. Ser-140 carries the phosphoserine modification. Residues Lys-143, Lys-171, Lys-191, and Lys-209 each carry the N6-acetyllysine; alternate modification. 4 positions are modified to N6-succinyllysine; alternate: Lys-143, Lys-171, Lys-191, and Lys-209. 2 positions are modified to N6-succinyllysine: Lys-212 and Lys-214. 2 residues coordinate CoA: Arg-224 and Thr-227. Lys-234 is subject to N6-acetyllysine; alternate. An N6-succinyllysine; alternate modification is found at Lys-234. Residue Lys-240 is modified to N6-succinyllysine. Lys-241 is subject to N6-acetyllysine. Ser-251 is a binding site for CoA. 2 positions are modified to N6-acetyllysine: Lys-269 and Lys-270. Lys-305 carries the post-translational modification N6-acetyllysine; alternate. At Lys-305 the chain carries N6-succinyllysine; alternate. Ser-310 is subject to Phosphoserine. An N6-acetyllysine; alternate modification is found at Lys-312. Lys-312 is subject to N6-succinyllysine; alternate. Ser-333 carries the post-translational modification Phosphoserine. 2 positions are modified to N6-acetyllysine: Lys-340 and Lys-375. Cys-382 functions as the Proton donor/acceptor in the catalytic mechanism.

The protein belongs to the thiolase-like superfamily. Thiolase family. In terms of assembly, homotetramer. Interacts with BNIP3.

The protein resides in the mitochondrion. The enzyme catalyses an acyl-CoA + acetyl-CoA = a 3-oxoacyl-CoA + CoA. It catalyses the reaction 2 acetyl-CoA = acetoacetyl-CoA + CoA. The catalysed reaction is acetyl-CoA + H2O = acetate + CoA + H(+). It carries out the reaction propanoyl-CoA + H2O = propanoate + CoA + H(+). The enzyme catalyses butanoyl-CoA + H2O = butanoate + CoA + H(+). It catalyses the reaction hexanoyl-CoA + H2O = hexanoate + CoA + H(+). The catalysed reaction is octanoyl-CoA + H2O = octanoate + CoA + H(+). It carries out the reaction decanoyl-CoA + H2O = decanoate + CoA + H(+). The enzyme catalyses dodecanoyl-CoA + H2O = dodecanoate + CoA + H(+). It catalyses the reaction tetradecanoyl-CoA + H2O = tetradecanoate + CoA + H(+). The catalysed reaction is hexadecanoyl-CoA + H2O = hexadecanoate + CoA + H(+). It participates in lipid metabolism; fatty acid beta-oxidation. Functionally, in the production of energy from fats, this is one of the enzymes that catalyzes the last step of the mitochondrial beta-oxidation pathway, an aerobic process breaking down fatty acids into acetyl-CoA. Using free coenzyme A/CoA, catalyzes the thiolytic cleavage of medium- to long-chain unbranched 3-oxoacyl-CoAs into acetyl-CoA and a fatty acyl-CoA shortened by two carbon atoms. Also catalyzes the condensation of two acetyl-CoA molecules into acetoacetyl-CoA and could be involved in the production of ketone bodies. Also displays hydrolase activity on various fatty acyl-CoAs. Thereby, could be responsible for the production of acetate in a side reaction to beta-oxidation. Abolishes BNIP3-mediated apoptosis and mitochondrial damage. The polypeptide is 3-ketoacyl-CoA thiolase, mitochondrial (ACAA2) (Bos taurus (Bovine)).